A 1059-amino-acid chain; its full sequence is DNA (cytosine-5)-methyltransferase CMT1 (1059 aa).

2 disordered regions span residues 1 to 196 (MVPE…GALA) and 230 to 272 (CVGE…DEAR). Residues 29–41 (AEAEAVADLDEID) are compositionally biased toward acidic residues. Composition is skewed to basic and acidic residues over residues 42–79 (REMSRAESRKRQRRTAKEKPGARKGATEWKPEDVEKAA), 92–129 (REMPRPELRKRQRRTAKEKPSAHEGATEWKPEDVEKAA), and 147–157 (SRGKRQRGVEK). Basic residues predominate over residues 158–167 (VKRRTRKKTA). The segment covering 252 to 262 (RRVEDSDDHFV) has biased composition (basic and acidic residues). The BAH domain maps to 312–436 (EIYHLDDDVY…VAYSTFANLP (125 aa)). Residues 479–1017 (ASLLDLYSGC…YALGLAYRGE (539 aa)) form the SAM-dependent MTase C5-type domain. Positions 584–649 (FDVEELLEIC…KGHKENILPL (66 aa)) constitute a Chromo domain. Cys-662 is an active-site residue.

Belongs to the class I-like SAM-binding methyltransferase superfamily. C5-methyltransferase family.

It is found in the nucleus. The enzyme catalyses a 2'-deoxycytidine in DNA + S-adenosyl-L-methionine = a 5-methyl-2'-deoxycytidine in DNA + S-adenosyl-L-homocysteine + H(+). In terms of biological role, involved in CpXpG DNA methylation. May not play a major role in maintaining CpXpG methylation. The protein is DNA (cytosine-5)-methyltransferase CMT1 of Oryza sativa subsp. japonica (Rice).